The following is a 370-amino-acid chain: uncharacterized protein (370 aa).

The first 27 residues, 1 to 27 (MSSAANEGCVYLFIVVLRLSSFSCVNS), serve as a signal peptide directing secretion. 3 N-linked (GlcNAc...) asparagine glycosylation sites follow: Asn-59, Asn-98, and Asn-126. Disordered stretches follow at residues 81-101 (SRSHTKKADTRGTADGKNTTA) and 123-167 (LSEN…CHQP). Residues 139–148 (HDDDDDDDLE) are compositionally biased toward acidic residues. N-linked (GlcNAc...) asparagine glycans are attached at residues Asn-171, Asn-221, Asn-230, and Asn-262.

This is an uncharacterized protein from Saccharomyces cerevisiae (strain ATCC 204508 / S288c) (Baker's yeast).